We begin with the raw amino-acid sequence, 637 residues long: MYNDQIHKITYSGVEVFEYTINGFPLMKRCHDNWLNATQILKIAELDKPRRTRILEKFAQKGLHEKIQGGCGKYQGTWVPSERAVELAHEYNVFDLIQPLIEYSGSAFMPMSTFTPQSNRKPTEAYRRNSPVKKSFSRPSHSLLYPYTSSNNMTSTSRMSGIHDALSLQSDFTRSPDMPSDSFTGSLHDIKASPFSSNNYAQSLLDYFLLPNTTQPPDFVYDRPSDWDVNAGIDEDGHTALHWAAAMGNLEMMHALLQAGANVVAVNYLQQTSLMRCVMFTMNYDLQTFEVVSELLQSAICMNDSFGQTVFHHIALLASSKSKMEAARYYMDILLQNLTATQSVDVAAQIINLQDDHGDTALLICARNGAKKCARLLLSFYASSSIPNNQGQYPTDFLSSKDMSFPENDDSPLNSKIEDNLIDNLKYPQSLDDHLSSKKPISYFSNKLTHQTLPNVFTQLSELSKCHEASLAEKQLTYNLAMEALEQTVRETETCQRLWNERTNNDENYLVNQREDLIHQCKKFLHTLKTARYYLETVQLHQLKKYVTYFSQIWSTDELADISETKNLVGHDTKTNRSSLSSKHEVDLFTAENEAAREKLVEQLCSLQAQRKQKINEILNLLSMGMYNTINTDQSGS.

The 107-residue stretch at 6-112 (IHKITYSGVE…YSGSAFMPMS (107 aa)) folds into the HTH APSES-type domain. The H-T-H motif DNA-binding region spans 37–58 (ATQILKIAELDKPRRTRILEKF). A disordered region spans residues 114–137 (FTPQSNRKPTEAYRRNSPVKKSFS). 2 ANK repeats span residues 236-265 (DGHTALHWAAAMGNLEMMHALLQAGANVVA) and 357-386 (HGDTALLICARNGAKKCARLLLSFYASSSI).

As to quaternary structure, DSC1 contains cdc10 and sct1/res1.

Acts as a positive regulator of the mitotic cell cycle and as a negative regulator of sexual differentiation. May be involved in the transcriptional regulation of the cdc22 and cdt1 genes. Is an integral component of the DSC1-like complex. The chain is Cell division cycle-related protein res1/sct1 (res1) from Schizosaccharomyces pombe (strain 972 / ATCC 24843) (Fission yeast).